The primary structure comprises 22 residues: Peptide PGLa-BM3 (22 aa).

Leu-22 bears the Leucine amide mark.

Expressed by the skin glands.

The protein localises to the secreted. Its function is as follows. Antimicrobial peptide. In Xenopus boumbaensis (Mawa clawed frog), this protein is Peptide PGLa-BM3.